A 294-amino-acid chain; its full sequence is 4-hydroxy-tetrahydrodipicolinate synthase (294 aa).

T47 serves as a coordination point for pyruvate. Y135 acts as the Proton donor/acceptor in catalysis. K163 functions as the Schiff-base intermediate with substrate in the catalytic mechanism. A pyruvate-binding site is contributed by T205.

It belongs to the DapA family. In terms of assembly, homotetramer; dimer of dimers.

The protein resides in the cytoplasm. It carries out the reaction L-aspartate 4-semialdehyde + pyruvate = (2S,4S)-4-hydroxy-2,3,4,5-tetrahydrodipicolinate + H2O + H(+). It participates in amino-acid biosynthesis; L-lysine biosynthesis via DAP pathway; (S)-tetrahydrodipicolinate from L-aspartate: step 3/4. In terms of biological role, catalyzes the condensation of (S)-aspartate-beta-semialdehyde [(S)-ASA] and pyruvate to 4-hydroxy-tetrahydrodipicolinate (HTPA). This is 4-hydroxy-tetrahydrodipicolinate synthase from Rickettsia akari (strain Hartford).